We begin with the raw amino-acid sequence, 800 residues long: Chondroitin sulfate synthase 1 (800 aa).

At 1-7 the chain is on the cytoplasmic side; it reads MAARGRR. Residues 8 to 28 form a helical; Signal-anchor for type II membrane protein membrane-spanning segment; that stretch reads AWLSMLLGLVLGFVLASRLVL. Residues 29–800 are Lumenal-facing; the sequence is PRASELKRVG…GGSHGSARTA (772 aa). A disordered region spans residues 36–66; sequence RVGPRRRPSPEGCRPGQEASQPGGARGDARG. N-linked (GlcNAc...) asparagine glycosylation is found at Asn-188 and Asn-622. 2 residues coordinate a divalent metal cation: Asp-632 and His-746.

Belongs to the chondroitin N-acetylgalactosaminyltransferase family. Co(2+) serves as cofactor. The cofactor is Mn(2+). Requires Cd(2+) as cofactor.

The protein localises to the golgi apparatus. It is found in the golgi stack membrane. The protein resides in the secreted. The enzyme catalyses 3-O-(beta-D-GlcA-(1-&gt;3)-beta-D-GalNAc-(1-&gt;4)-beta-D-GlcA-(1-&gt;3)-beta-D-Gal-(1-&gt;3)-beta-D-Gal-(1-&gt;4)-beta-D-Xyl)-L-seryl-[protein] + UDP-N-acetyl-alpha-D-galactosamine = 3-O-(beta-D-GalNAc-(1-&gt;4)-beta-D-GlcA-(1-&gt;3)-beta-D-GalNAc-(1-&gt;4)-beta-D-GlcA-(1-&gt;3)-beta-D-Gal-(1-&gt;3)-beta-D-Gal-(1-&gt;4)-beta-D-Xyl)-L-seryl-[protein] + UDP + H(+). It catalyses the reaction 3-O-{beta-D-GlcA-(1-&gt;3)-[beta-D-GalNAc-(1-&gt;4)-beta-D-GlcA-(1-&gt;3)](n)-beta-D-GalNAc-(1-&gt;4)-beta-D-GlcA-(1-&gt;3)-beta-D-Gal-(1-&gt;3)-beta-D-Gal-(1-&gt;4)-beta-D-Xyl}-L-seryl-[protein] + UDP-N-acetyl-alpha-D-galactosamine = 3-O-{[beta-D-GalNAc-(1-&gt;4)-beta-D-GlcA-(1-&gt;3)](n+1)-beta-D-GalNAc-(1-&gt;4)-beta-D-GlcA-(1-&gt;3)-beta-D-Gal-(1-&gt;3)-beta-D-Gal-(1-&gt;4)-beta-D-Xyl}-L-seryl-[protein] + UDP + H(+). It carries out the reaction 3-O-(beta-D-GalNAc-(1-&gt;4)-beta-D-GlcA-(1-&gt;3)-beta-D-Gal-(1-&gt;3)-beta-D-Gal-(1-&gt;4)-beta-D-Xyl)-L-seryl-[protein] + UDP-alpha-D-glucuronate = 3-O-(beta-D-GlcA-(1-&gt;3)-beta-D-GalNAc-(1-&gt;4)-beta-D-GlcA-(1-&gt;3)-beta-D-Gal-(1-&gt;3)-beta-D-Gal-(1-&gt;4)-beta-D-Xyl)-L-seryl-[protein] + UDP + H(+). The catalysed reaction is 3-O-{[beta-D-GalNAc-(1-&gt;4)-beta-D-GlcA-(1-&gt;3)](n)-beta-D-GalNAc-(1-&gt;4)-beta-D-GlcA-(1-&gt;3)-beta-D-Gal-(1-&gt;3)-beta-D-Gal-(1-&gt;4)-beta-D-Xyl}-L-seryl-[protein] + UDP-alpha-D-glucuronate = 3-O-{beta-D-GlcA-(1-&gt;3)-[beta-D-GalNAc-(1-&gt;4)-beta-D-GlcA-(1-&gt;3)](n)-beta-D-GalNAc-(1-&gt;4)-beta-D-GlcA-(1-&gt;3)-beta-D-Gal-(1-&gt;3)-beta-D-Gal-(1-&gt;4)-beta-D-Xyl}-L-seryl-[protein] + UDP + H(+). Its function is as follows. Has both beta-1,3-glucuronic acid and beta-1,4-N-acetylgalactosamine transferase activity. Transfers glucuronic acid (GlcUA) from UDP-GlcUA and N-acetylgalactosamine (GalNAc) from UDP-GalNAc to the non-reducing end of the elongating chondroitin polymer. Involved in the negative control of osteogenesis likely through the modulation of NOTCH signaling. The chain is Chondroitin sulfate synthase 1 (Chsy1) from Mus musculus (Mouse).